Consider the following 564-residue polypeptide: Formate--tetrahydrofolate ligase (564 aa).

65–72 (TPLGEGKT) is a binding site for ATP.

Belongs to the formate--tetrahydrofolate ligase family.

The catalysed reaction is (6S)-5,6,7,8-tetrahydrofolate + formate + ATP = (6R)-10-formyltetrahydrofolate + ADP + phosphate. It functions in the pathway one-carbon metabolism; tetrahydrofolate interconversion. The sequence is that of Formate--tetrahydrofolate ligase from Roseiflexus castenholzii (strain DSM 13941 / HLO8).